Reading from the N-terminus, the 657-residue chain is MLSARSFLSSARTIARSSLMSARSLSDKPKGHVIGIDLGTTNSCVSIMEGKTPKVIENAEGVRTTPSTVAFTADGERLVGAPAKRQAVTNSANTLFATKRLIGRRYEDPEVQKDLKVVPYKIVKASNGDAWVEAQGKVYSPSQVGAFVLMKMKETAESYLGTTVNNAVVTVPAYFNDSQRQATKDAGQISGLNVLRVINEPTAAALAYGLDKDAGDKIIAVYDLGGGTFDVSILEIQKGVFEVKSTNGDTFLGGEDFDHALVHHLVGEFKKEQGVDLTKDPQAMQRLREAAEKAKCELSSTTQTDINLPYITMDQSGPKHLNLKLTRAKFEQIVGDLIKRTIEPCRKALHDAEVKSSQIADVLLVGGMSRMPKVQATVQEIFGKVPSKAVNPDEAVAMGAAIQGAVLAGDVTDVLLLDVTPLSLGIETLGGIMTKLITRNTTIPTKKSQVFSTAADGQTQVQIKVFQGEREMATSNKLLGQFSLVGIPPAPRGVPQVEVTFDIDANGIVNVSARDRGTGKEQQIVIQSSGGLSKDQIENMIKEAEKNAAEDAKRKELVEVINQAEGIIHDTEAKMTEFADQLPKDECEALRTKIADTKKILDNKDNETPEAIKEACNTLQQQSLKLFEAAYKNMAAKNSGGDAQEAKTAEEPKKEQN.

The N-terminal 27 residues, 1-27 (MLSARSFLSSARTIARSSLMSARSLSD), are a transit peptide targeting the mitochondrion. The disordered stretch occupies residues 637–657 (KNSGGDAQEAKTAEEPKKEQN). A compositionally biased stretch (basic and acidic residues) spans 644–657 (QEAKTAEEPKKEQN).

It belongs to the heat shock protein 70 family.

Its subcellular location is the mitochondrion. The polypeptide is Heat shock protein hsp-6 (Caenorhabditis elegans).